The primary structure comprises 706 residues: Zinc finger and BTB domain-containing protein 17 (706 aa).

A BTB domain is found at 1–12 (LKSLTVLAESPV). The interval 32–194 (TAARVTQGDS…LLRSGTYSDR (163 aa)) is disordered. Residues 67–78 (EPAEQPDAKEGP) are compositionally biased toward basic and acidic residues. A compositionally biased stretch (low complexity) spans 90–106 (AAEASPAAVSPSRPQPA). A compositionally biased stretch (acidic residues) spans 134–148 (GKEEEGEAMVEDEEE). Residues 170-182 (SGSTDSGQENSGE) are compositionally biased toward polar residues. 13 C2H2-type zinc fingers span residues 205-227 (HKCEDCGKEFTHTGNFKRHIRIH), 233-255 (FSCRECNKAFSDPAACKAHEKTH), 261-283 (YGCEECGKSYRLISLLNLHKKRH), 289-311 (YRCDDCGKLFTTSGNLKRHQLVH), 317-339 (YQCDYCGRSFSDPTSKMRHLETH), 345-367 (HKCPHCDKKFNQVGNLKAHLKIH), 373-395 (LKCRECGNEFTTSGNLKRHLRIH), 401-423 (YVCVHCQRQFADPGALQAHVPIH), 427-450 (KPCQCLICGKAFTQASSLIAHVRH), 457-479 (YVCERCGKRFVQSSQLANHIRHH), 485-507 (HKCTVCNKAFVNVGDLSKHIIIH), 513-536 (FLCDKCGRGFNRVDNLRSHVKTVH), and 618-640 (YACDSCGEKFLDATSLAQHVRIH). The segment at 680-706 (PRDSPQEAPAAPLAPVPLAGEGQAPAE) is disordered. The segment covering 687-698 (APAAPLAPVPLA) has biased composition (low complexity).

This sequence belongs to the krueppel C2H2-type zinc-finger protein family.

Its subcellular location is the nucleus. Functionally, transcription factor that can function as an activator or repressor depending on its binding partners, and by targeting negative regulators of cell cycle progression. Plays a critical role in early lymphocyte development, where it is essential to prevent apoptosis in lymphoid precursors, allowing them to survive in response to IL7 and undergo proper lineage commitment. Has been shown to bind to the promoters of adenovirus major late protein and cyclin D1 and activate transcription. Required for early embryonic development during gastrulation. Represses RB1 transcription. This is Zinc finger and BTB domain-containing protein 17 (ZBTB17) from Gallus gallus (Chicken).